A 349-amino-acid polypeptide reads, in one-letter code: N-acetyl-gamma-glutamyl-phosphate reductase (349 aa).

C153 is a catalytic residue.

Belongs to the NAGSA dehydrogenase family. Type 1 subfamily.

It localises to the cytoplasm. The catalysed reaction is N-acetyl-L-glutamate 5-semialdehyde + phosphate + NADP(+) = N-acetyl-L-glutamyl 5-phosphate + NADPH + H(+). It functions in the pathway amino-acid biosynthesis; L-arginine biosynthesis; N(2)-acetyl-L-ornithine from L-glutamate: step 3/4. Catalyzes the NADPH-dependent reduction of N-acetyl-5-glutamyl phosphate to yield N-acetyl-L-glutamate 5-semialdehyde. In Magnetococcus marinus (strain ATCC BAA-1437 / JCM 17883 / MC-1), this protein is N-acetyl-gamma-glutamyl-phosphate reductase.